The chain runs to 335 residues: MTLPLLGPMSFSGFEHPWFFLFLIVVLALAGLYVIVALARQRRILRFANMELLESVAPNRPNRWRHLPAILLVASLVLLTVAMAGPTRDVRVPRNRAVVMLVIDVSQSMRATDVSPSRLAAAQEASKQFADELTPGINLGLIAYAGTATVLVSPTTNREATKTAIDKLQLADRTATGEGIFTALQAIATVGAVIGGGDEPPPARIVLFSDGKETVPSNPDNPKGAFTAARTAKDQGVPISTISFGTPYGYVEINEQRQPVPVDDQMLKKIADLSEGEAFTASSLEQLREVYANLQQQIGYETIKGDASVGWLRLGALVLALSALAALLLNRRLPG.

The next 2 membrane-spanning stretches (helical) occupy residues 18 to 38 and 67 to 87; these read WFFL…IVAL and LPAI…AGPT. The VWFA domain occupies 98-294; it reads VVMLVIDVSQ…EQLREVYANL (197 aa). Residues 309–329 traverse the membrane as a helical segment; it reads VGWLRLGALVLALSALAALLL.

Belongs to the UPF0353 family.

It is found in the cell membrane. The sequence is that of UPF0353 protein Mjls_2492 from Mycobacterium sp. (strain JLS).